The sequence spans 390 residues: MNFEFEREIGFINSQPSLAECLTSFPAVLESFQTSSIKDSTAIPPPFEHTIPSLSPCTGNQARPRSQKRTASNGLQLRTQTAPPTQHQQGPAPLSGGAPLAHEFPWMKEKKSSKKCPKPGATAAAAAASPSQASSGYTTAGLESPTEIQGGLDNVSGSRRLRTAYTNTQLLELEKEFHFNKYLCRPRRVEIAALLDLTERQVKVWFQNRRMKHKRQTTHHRDGQEGEPSGFDLLEGTDASSPYSSQSLEVSGSGSAAPSESETCPTTAAYTNSSDKSQPTPEEGQASQPEPASVPDTAVHSPPYPTPTADNPTTMAEGRAAGPEHSFTEPQDATSLPDLNFFSTDSCLQISDALSPSLQSSLDSPVDFSEEDFDLFTSTLCTIDLQHLQF.

Disordered regions lie at residues 40 to 73, 81 to 100, 108 to 155, and 211 to 338; these read STAI…TASN, TAPP…GAPL, KEKK…LDNV, and MKHK…SLPD. The segment covering 52-73 has biased composition (polar residues); the sequence is PSLSPCTGNQARPRSQKRTASN. The Antp-type hexapeptide signature appears at 103–108; it reads EFPWMK. Positions 118 to 135 are enriched in low complexity; sequence KPGATAAAAAASPSQASS. Positions 158–217 form a DNA-binding region, homeobox; sequence SRRLRTAYTNTQLLELEKEFHFNKYLCRPRRVEIAALLDLTERQVKVWFQNRRMKHKRQT. Over residues 244-262 the composition is skewed to low complexity; it reads SSQSLEVSGSGSAAPSESE. Residues 263 to 290 are compositionally biased toward polar residues; that stretch reads TCPTTAAYTNSSDKSQPTPEEGQASQPE.

Belongs to the Antp homeobox family. Proboscipedia subfamily.

The protein localises to the nucleus. In terms of biological role, sequence-specific transcription factor which is part of a developmental regulatory system that provides cells with specific positional identities on the anterior-posterior axis. Plays an important role in the patterning of hindbrain and pharyngeal arches. This is Homeobox protein Hox-B2a (hoxb2a) from Danio rerio (Zebrafish).